The following is a 226-amino-acid chain: Hand transcription factor 1 (226 aa).

Positions 1–15 (MVKSTTAGNNAVSSL) are enriched in polar residues. A disordered region spans residues 1 to 35 (MVKSTTAGNNAVSSLESTDSKKSRKEKSREKEHRR). The tract at residues 23–36 (SRKEKSREKEHRRA) is basic motif. In terms of domain architecture, bHLH spans 23-77 (SRKEKSREKEHRRAQCINSAFEILQQHIPYLKSEERKSLPKIKTLRLAMQYIDHL). Positions 37-77 (QCINSAFEILQQHIPYLKSEERKSLPKIKTLRLAMQYIDHL) are helix-loop-helix motif.

Its subcellular location is the nucleus. Functionally, probable transcription factor which regulates early embryonic myogenesis, in cooperation with transcription factors unc-120 and hlh-1. Involved in controlling the number and position of somatic gonadal precursor cells (SGPs) in the gonadal primordium, and embryonic body shape. In Caenorhabditis elegans, this protein is Hand transcription factor 1.